The chain runs to 187 residues: Interferon beta (187 aa).

Residues 1–21 (MTNKCLLQIALLLCFSTTALS) form the signal peptide. Tyrosine 24 carries the post-translational modification Phosphotyrosine. Cysteine 52 and cysteine 162 are joined by a disulfide. N-linked (GlcNAc...) asparagine glycosylation occurs at asparagine 101.

The protein belongs to the alpha/beta interferon family. Monomer.

It localises to the secreted. In terms of biological role, type I interferon cytokine that plays a key role in the innate immune response to infection, developing tumors and other inflammatory stimuli. Signals via binding to high-affinity (IFNAR2) and low-affinity (IFNAR1) heterodimeric receptor, activating the canonical Jak-STAT signaling pathway resulting in transcriptional activation or repression of interferon-regulated genes that encode the effectors of the interferon response, such as antiviral proteins, regulators of cell proliferation and differentiation, and immunoregulatory proteins. Signals mostly via binding to a IFNAR1-IFNAR2 heterodimeric receptor, but can also function with IFNAR1 alone and independently of Jak-STAT pathways. Elicits a wide variety of responses, including antiviral and antibacterial activities, and can regulate the development of B-cells, myelopoiesis and lipopolysaccharide (LPS)-inducible production of tumor necrosis factor. Plays a role in neuronal homeostasis by regulating dopamine turnover and protecting dopaminergic neurons: acts by promoting neuronal autophagy and alpha-synuclein clearance, thereby preventing dopaminergic neuron loss. IFNB1 is more potent than interferon-alpha (IFN-alpha) in inducing the apoptotic and antiproliferative pathways required for control of tumor cell growth. The protein is Interferon beta (IFNB1) of Macaca fascicularis (Crab-eating macaque).